The sequence spans 51 residues: Lysis protein for colicin A (51 aa).

An N-terminal signal peptide occupies residues 1 to 18 (MKKIIICVILLAIMLLAA). Cys19 carries the N-palmitoyl cysteine lipid modification. A lipid anchor (S-diacylglycerol cysteine) is attached at Cys19. Residues 27–51 (TGGGSVSPSSIVTGVSMGSDGVGNP) form a disordered region.

Its subcellular location is the cell outer membrane. In terms of biological role, lysis proteins are required for both colicin release and partial cell lysis. This chain is Lysis protein for colicin A (cal), found in Citrobacter freundii.